The sequence spans 471 residues: UTP--glucose-1-phosphate uridylyltransferase (471 aa).

UTP contacts are provided by residues 87 to 90 (LNGG), lysine 101, glutamine 164, and glycine 193. Position 89–90 (89–90 (GG)) interacts with substrate. Substrate-binding positions include histidine 194 and 222 to 224 (NSD). Positions 224 and 362 each coordinate UTP.

It belongs to the UDPGP type 1 family.

It is found in the cytoplasm. It carries out the reaction alpha-D-glucose 1-phosphate + UTP + H(+) = UDP-alpha-D-glucose + diphosphate. In terms of biological role, plays a central role as a glucosyl donor in cellular metabolic pathways. The polypeptide is UTP--glucose-1-phosphate uridylyltransferase (UGP) (Astragalus penduliflorus (Mountain lentil)).